The chain runs to 115 residues: Large ribosomal subunit protein bL20c (115 aa).

The protein belongs to the bacterial ribosomal protein bL20 family.

The protein localises to the plastid. The protein resides in the chloroplast. In terms of biological role, binds directly to 23S ribosomal RNA and is necessary for the in vitro assembly process of the 50S ribosomal subunit. It is not involved in the protein synthesizing functions of that subunit. The polypeptide is Large ribosomal subunit protein bL20c (Nymphaea alba (White water-lily)).